The sequence spans 285 residues: MAGLSHPSVFGRATHAVVRAPPESLCRHALRRSQGEEVDFARAERQHQLYVGVLGSKLGLQVVQLPADESLPDCVFVEDVAVVCEETALITRPGAPSRRKEVDMMKEALEKLQLNIVEMKDENATLDGGDVLFTGREFFVGLSKRTNQRGAEILADTFKDYAVSTVPVADSLHLKSFCSMAGPNLIAIGSSESAQKALKIMQQMSDHRYDKLTVPDDMAANCIYLNIPSKGHVLLHRTPEEYPESAKVYEKLKDHLLIPVSNSEMEKVDGLLTCCSVFINKKTDS.

A2 carries the N-acetylalanine modification. L30 serves as a coordination point for substrate. S33 carries the phosphoserine modification. Residues D73, E78, D79, R98, and R145 each contribute to the substrate site. The active-site Proton donor is H173. The residue at position 222 (C222) is an S-nitrosocysteine. V268 contacts substrate. C274 bears the S-nitrosocysteine mark. The active-site Nucleophile is C274. Zn(2+) is bound at residue C274.

The protein belongs to the DDAH family. In terms of assembly, monomer. As to expression, detected in red blood cells (at protein level). Widely distributed, high amounts found in kidney, brain, aorta and pancreas.

It catalyses the reaction N(omega),N(omega)-dimethyl-L-arginine + H2O = dimethylamine + L-citrulline. The enzyme catalyses N(omega)-methyl-L-arginine + H2O = L-citrulline + methylamine. With respect to regulation, inhibited by zinc ions. Its function is as follows. Hydrolyzes N(G),N(G)-dimethyl-L-arginine (ADMA) and N(G)-monomethyl-L-arginine (MMA) which act as inhibitors of NOS. Has therefore a role in the regulation of nitric oxide generation. This is N(G),N(G)-dimethylarginine dimethylaminohydrolase 1 (Ddah1) from Rattus norvegicus (Rat).